A 726-amino-acid chain; its full sequence is Catalase-peroxidase (726 aa).

The interval 1-33 is disordered; it reads MSTTDDTHNTLSTGKCPFHQGGHDRSAGAGTAS. Residues 105-226 constitute a cross-link (tryptophyl-tyrosyl-methioninium (Trp-Tyr) (with M-252)); the sequence is WHGAGTYRSI…LGATEMGLIY (122 aa). Histidine 106 functions as the Proton acceptor in the catalytic mechanism. A cross-link (tryptophyl-tyrosyl-methioninium (Tyr-Met) (with W-105)) is located at residues 226-252; sequence YVNPEGPDHSGEPLSAAAAIRATFGNM. Position 267 (histidine 267) interacts with heme b.

Belongs to the peroxidase family. Peroxidase/catalase subfamily. In terms of assembly, homodimer or homotetramer. The cofactor is heme b. In terms of processing, formation of the three residue Trp-Tyr-Met cross-link is important for the catalase, but not the peroxidase activity of the enzyme.

The catalysed reaction is H2O2 + AH2 = A + 2 H2O. It carries out the reaction 2 H2O2 = O2 + 2 H2O. Functionally, bifunctional enzyme with both catalase and broad-spectrum peroxidase activity. The protein is Catalase-peroxidase of Salmonella heidelberg (strain SL476).